The primary structure comprises 614 residues: FAD-dependent monooxygenase terD (614 aa).

The signal sequence occupies residues 1–23; it reads MSSKFDVVICGSGTAGLAAATWL. Residues 6–35, Q44, V137, and 239–241 each bind FAD; these read DVVI…ILES and RVY. N-linked (GlcNAc...) asparagine glycosylation is present at N260. Positions 282 and 303 each coordinate FAD. A glycan (N-linked (GlcNAc...) asparagine) is linked at N317. An FAD-binding site is contributed by S319. N-linked (GlcNAc...) asparagine glycosylation is present at N602.

Belongs to the PheA/TfdB FAD monooxygenase family. FAD is required as a cofactor.

The protein operates within secondary metabolite biosynthesis. In terms of biological role, FAD-dependent monooxygenase; part of the gene cluster that mediates the biosynthesis of terrein, a fungal metabolite with ecological, antimicrobial, antiproliferative, and antioxidative activities. The first step in the pathway is performed by the polyketide synthase terA that produces 4-hydroxy-6-methylpyranon (4-HMP), orsellinic acid (OA), and 2,3-dehydro-6-hydroxymellein (2,3-dehydro-6-HM) by condensing acetyl-CoA with two, three, or four malonyl-CoA units, respectively. 4-HMP and OA are not pathway intermediates, but are rather shunt or side products. 2,3-dehydro-6-HM is further converted to 6-hydroxymellein (6-HM) by the 6-hydroxymellein synthase terB. The monooxygenases terC and terD, the multicopper oxidase terE and the Kelch-like protein terF are then involved in the transformation of 6-HM to terrein. Even if they are co-regulated with the other terrein cluster genes, terH and terI seem to be dispensable for terrein production; whereas one or both of the 2 transporters terG and terJ are probably required for efficient secretion of metabolites. The sequence is that of FAD-dependent monooxygenase terD from Aspergillus terreus (strain NIH 2624 / FGSC A1156).